The chain runs to 106 residues: UPF0145 protein CLH_2273 (106 aa).

Belongs to the UPF0145 family.

The protein is UPF0145 protein CLH_2273 of Clostridium botulinum (strain Alaska E43 / Type E3).